We begin with the raw amino-acid sequence, 259 residues long: Ribonuclease HII (259 aa).

Residues 70–258 enclose the RNase H type-2 domain; the sequence is TLIAGIDEVG…VKSLVLGKKE (189 aa). A divalent metal cation-binding residues include Asp-76, Glu-77, and Asp-168.

It belongs to the RNase HII family. The cofactor is Mn(2+). Mg(2+) is required as a cofactor.

The protein localises to the cytoplasm. The enzyme catalyses Endonucleolytic cleavage to 5'-phosphomonoester.. In terms of biological role, endonuclease that specifically degrades the RNA of RNA-DNA hybrids. The chain is Ribonuclease HII from Streptococcus pneumoniae serotype 4 (strain ATCC BAA-334 / TIGR4).